The sequence spans 153 residues: Cornifin-B (153 aa).

Disordered regions lie at residues 1 to 35 (MSSH…PCVS) and 49 to 85 (CHPK…HPKA). A run of 14 repeats spans residues 27–34 (PPPPEPCV), 35–42 (SQVKTPCD), 43–50 (TKVPEPCH), 51–58 (PKAPEPCH), 59–66 (PKAPEPCH), 67–74 (PKAPEPCH), 75–82 (PKAPEPCH), 83–90 (PKAPEPCH), 91–98 (PKAPEPCH), 99–106 (PKAPEPCH), 107–114 (PKAPEPCH), 115–122 (PKVPEPCL), 123–130 (PKAPEPCQ), and 131–138 (PIVPEPCP). The interval 27 to 138 (PPPPEPCVSQ…CQPIVPEPCP (112 aa)) is 14 X 8 AA approximate tandem repeats.

It belongs to the cornifin (SPRR) family. As to expression, expressed in fetal periderm, hair follicles and in the thickened epidermis of the lip and footpad. Also present in the epithelia of various tissues such as the penis, vagina, forestomach, tongue and esophagus.

The protein localises to the cytoplasm. In terms of biological role, cross-linked envelope protein of keratinocytes. It is a keratinocyte protein that first appears in the cell cytosol, but ultimately becomes cross-linked to membrane proteins by transglutaminase. All that results in the formation of an insoluble envelope beneath the plasma membrane. The chain is Cornifin-B (Sprr1b) from Mus musculus (Mouse).